The primary structure comprises 121 residues: Large ribosomal subunit protein bL12 (121 aa).

It belongs to the bacterial ribosomal protein bL12 family. In terms of assembly, homodimer. Part of the ribosomal stalk of the 50S ribosomal subunit. Forms a multimeric L10(L12)X complex, where L10 forms an elongated spine to which 2 to 4 L12 dimers bind in a sequential fashion. Binds GTP-bound translation factors.

Its function is as follows. Forms part of the ribosomal stalk which helps the ribosome interact with GTP-bound translation factors. Is thus essential for accurate translation. The chain is Large ribosomal subunit protein bL12 from Pseudomonas fluorescens (strain ATCC BAA-477 / NRRL B-23932 / Pf-5).